A 155-amino-acid polypeptide reads, in one-letter code: Ribonuclease H (155 aa).

The 142-residue stretch at 4–145 folds into the RNase H type-1 domain; sequence NISKVVIYTD…ADKLAAQGRQ (142 aa). The Mg(2+) site is built by aspartate 13, glutamate 51, aspartate 73, and aspartate 137.

The protein belongs to the RNase H family. As to quaternary structure, monomer. Mg(2+) is required as a cofactor.

The protein localises to the cytoplasm. The catalysed reaction is Endonucleolytic cleavage to 5'-phosphomonoester.. Its function is as follows. Endonuclease that specifically degrades the RNA of RNA-DNA hybrids. This chain is Ribonuclease H, found in Rickettsia canadensis (strain McKiel).